The chain runs to 94 residues: Large ribosomal subunit protein bL28 (94 aa).

Residues Met-1–Ser-21 form a disordered region. Residues Gly-11–His-20 show a composition bias toward polar residues.

This sequence belongs to the bacterial ribosomal protein bL28 family.

This is Large ribosomal subunit protein bL28 from Leptospira interrogans serogroup Icterohaemorrhagiae serovar copenhageni (strain Fiocruz L1-130).